We begin with the raw amino-acid sequence, 424 residues long: D-inositol 3-phosphate glycosyltransferase (424 aa).

H21 contributes to the 1D-myo-inositol 3-phosphate binding site. UDP-N-acetyl-alpha-D-glucosamine-binding positions include 27–28 (QP) and G35. 1D-myo-inositol 3-phosphate-binding positions include 32-37 (DAGGMN), K90, Y123, T147, and R167. R241, K246, and Q299 together coordinate UDP-N-acetyl-alpha-D-glucosamine. Positions 308, 309, and 311 each coordinate Mg(2+). E321 and E329 together coordinate UDP-N-acetyl-alpha-D-glucosamine. T335 is a binding site for Mg(2+).

The protein belongs to the glycosyltransferase group 1 family. MshA subfamily. In terms of assembly, homodimer.

The catalysed reaction is 1D-myo-inositol 3-phosphate + UDP-N-acetyl-alpha-D-glucosamine = 1D-myo-inositol 2-acetamido-2-deoxy-alpha-D-glucopyranoside 3-phosphate + UDP + H(+). Its function is as follows. Catalyzes the transfer of a N-acetyl-glucosamine moiety to 1D-myo-inositol 3-phosphate to produce 1D-myo-inositol 2-acetamido-2-deoxy-glucopyranoside 3-phosphate in the mycothiol biosynthesis pathway. The chain is D-inositol 3-phosphate glycosyltransferase from Mycobacterium avium (strain 104).